The sequence spans 425 residues: Phosphomethylpyrimidine synthase (425 aa).

Residues Met94, Tyr123, His162, 184 to 186 (SRG), 225 to 228 (NGMR), and Glu264 each bind substrate. His268 serves as a coordination point for Zn(2+). A substrate-binding site is contributed by Tyr291. Residue His332 participates in Zn(2+) binding. 3 residues coordinate [4Fe-4S] cluster: Cys407, Cys410, and Cys414.

It belongs to the ThiC family. Requires [4Fe-4S] cluster as cofactor.

It carries out the reaction 5-amino-1-(5-phospho-beta-D-ribosyl)imidazole + S-adenosyl-L-methionine = 4-amino-2-methyl-5-(phosphooxymethyl)pyrimidine + CO + 5'-deoxyadenosine + formate + L-methionine + 3 H(+). The protein operates within cofactor biosynthesis; thiamine diphosphate biosynthesis. In terms of biological role, catalyzes the synthesis of the hydroxymethylpyrimidine phosphate (HMP-P) moiety of thiamine from aminoimidazole ribotide (AIR) in a radical S-adenosyl-L-methionine (SAM)-dependent reaction. The chain is Phosphomethylpyrimidine synthase from Methanocorpusculum labreanum (strain ATCC 43576 / DSM 4855 / Z).